The primary structure comprises 192 residues: LOB domain-containing protein 32 (192 aa).

Residues 4–105 form the LOB domain; sequence NRCAVCKILN…QDIESAVNEL (102 aa).

This sequence belongs to the LOB domain-containing protein family.

This Arabidopsis thaliana (Mouse-ear cress) protein is LOB domain-containing protein 32 (LBD32).